Here is a 434-residue protein sequence, read N- to C-terminus: 3-phosphoshikimate 1-carboxyvinyltransferase (434 aa).

Residues lysine 15, serine 16, and arginine 20 each contribute to the 3-phosphoshikimate site. Lysine 15 contributes to the phosphoenolpyruvate binding site. Phosphoenolpyruvate is bound by residues glycine 96 and arginine 124. The 3-phosphoshikimate site is built by serine 169, glutamine 171, serine 195, aspartate 319, and lysine 346. Residue glutamine 171 coordinates phosphoenolpyruvate. The active-site Proton acceptor is aspartate 319. The phosphoenolpyruvate site is built by arginine 350 and arginine 394.

It belongs to the EPSP synthase family. Monomer.

The protein localises to the cytoplasm. It catalyses the reaction 3-phosphoshikimate + phosphoenolpyruvate = 5-O-(1-carboxyvinyl)-3-phosphoshikimate + phosphate. Its pathway is metabolic intermediate biosynthesis; chorismate biosynthesis; chorismate from D-erythrose 4-phosphate and phosphoenolpyruvate: step 6/7. Functionally, catalyzes the transfer of the enolpyruvyl moiety of phosphoenolpyruvate (PEP) to the 5-hydroxyl of shikimate-3-phosphate (S3P) to produce enolpyruvyl shikimate-3-phosphate and inorganic phosphate. This chain is 3-phosphoshikimate 1-carboxyvinyltransferase, found in Chlorobaculum parvum (strain DSM 263 / NCIMB 8327) (Chlorobium vibrioforme subsp. thiosulfatophilum).